Reading from the N-terminus, the 520-residue chain is N-acetylgalactosamine-6-sulfatase (520 aa).

An N-terminal signal peptide occupies residues 1-23 (MAACTAAQQLLLVLSALGLLAAG). Positions 24–377 (APQPPNIVLL…PTMLKGQMMD (354 aa)) are catalytic domain. Positions 36, 37, and 76 each coordinate Ca(2+). The Nucleophile role is filled by C76. C76 carries the post-translational modification 3-oxoalanine (Cys). H139 is a catalytic residue. The N-linked (GlcNAc...) asparagine glycan is linked to N201. Ca(2+) contacts are provided by D286 and N287. A disulfide bond links C306 and C417. Residue N421 is glycosylated (N-linked (GlcNAc...) asparagine). 2 disulfide bridges follow: C487–C516 and C499–C505.

It belongs to the sulfatase family. Homodimer. The cofactor is Ca(2+). In terms of processing, the conversion to 3-oxoalanine (also known as C-formylglycine, FGly), of a serine or cysteine residue in prokaryotes and of a cysteine residue in eukaryotes, is critical for catalytic activity. Widely expressed. Higher expression in liver and kidney.

It is found in the lysosome. It catalyses the reaction Hydrolysis of the 6-sulfate groups of the N-acetyl-D-galactosamine 6-sulfate units of chondroitin sulfate and of the D-galactose 6-sulfate units of keratan sulfate.. This is N-acetylgalactosamine-6-sulfatase (Galns) from Mus musculus (Mouse).